The primary structure comprises 95 residues: MSDQITYNPGAVSDFASDVGSRAGQLHMIYEDTASKTNALQEFFAGHGAQGFFDAQAQMLSGLQGLIETVGQHGTTTGHVLDNAIGTDQAIAGLF.

The protein belongs to the WXG100 family. ESAT-6 subfamily.

It localises to the secreted. The polypeptide is ESAT-6-like protein EsxC (Mycobacterium tuberculosis (strain CDC 1551 / Oshkosh)).